A 429-amino-acid polypeptide reads, in one-letter code: Chaperone SurA (429 aa).

An N-terminal signal peptide occupies residues 1–18; sequence MFKRIALVCALFSGVCFA. 2 PpiC domains span residues 170-271 and 281-380; these read NLTY…KLVA and ITQT…EVIA.

It localises to the periplasm. It carries out the reaction [protein]-peptidylproline (omega=180) = [protein]-peptidylproline (omega=0). Functionally, chaperone involved in the correct folding and assembly of outer membrane proteins. Recognizes specific patterns of aromatic residues and the orientation of their side chains, which are found more frequently in integral outer membrane proteins. May act in both early periplasmic and late outer membrane-associated steps of protein maturation. This is Chaperone SurA from Legionella pneumophila subsp. pneumophila (strain Philadelphia 1 / ATCC 33152 / DSM 7513).